The sequence spans 533 residues: Retinoid isomerohydrolase (533 aa).

The residue at position 2 (S2) is an N-acetylserine. 2 positions are modified to phosphothreonine: T101 and T105. The S-palmitoyl cysteine; in membrane form moiety is linked to residue C112. K113 bears the N6-acetyllysine mark. Residue S117 is modified to Phosphoserine. H180 contributes to the Fe cation binding site. C231 is lipidated: S-palmitoyl cysteine; in membrane form. Positions 241 and 313 each coordinate Fe cation. 2 S-palmitoyl cysteine; in membrane form lipidation sites follow: C329 and C330. H527 serves as a coordination point for Fe cation.

This sequence belongs to the carotenoid oxygenase family. In terms of assembly, interacts with MYO7A; this mediates light-dependent intracellular transport of RPE65. It depends on Fe(2+) as a cofactor. Palmitoylation by LRAT regulates ligand binding specificity; the palmitoylated form (membrane form) specifically binds all-trans-retinyl-palmitate, while the soluble unpalmitoylated form binds all-trans-retinol (vitamin A). As to expression, retinal pigment epithelium specific.

Its subcellular location is the cytoplasm. It is found in the cell membrane. It localises to the microsome membrane. The catalysed reaction is an all-trans-retinyl ester + H2O = 11-cis-retinol + a fatty acid + H(+). It catalyses the reaction lutein = (3R,3'S)-zeaxanthin. It carries out the reaction all-trans-retinyl hexadecanoate + H2O = 11-cis-retinol + hexadecanoate + H(+). In terms of biological role, critical isomerohydrolase in the retinoid cycle involved in regeneration of 11-cis-retinal, the chromophore of rod and cone opsins. Catalyzes the cleavage and isomerization of all-trans-retinyl fatty acid esters to 11-cis-retinol which is further oxidized by 11-cis retinol dehydrogenase to 11-cis-retinal for use as visual chromophore. Essential for the production of 11-cis retinal for both rod and cone photoreceptors. Also capable of catalyzing the isomerization of lutein to meso-zeaxanthin an eye-specific carotenoid. The soluble form binds vitamin A (all-trans-retinol), making it available for LRAT processing to all-trans-retinyl ester. The membrane form, palmitoylated by LRAT, binds all-trans-retinyl esters, making them available for IMH (isomerohydrolase) processing to all-cis-retinol. The soluble form is regenerated by transferring its palmitoyl groups onto 11-cis-retinol, a reaction catalyzed by LRAT. This Canis lupus familiaris (Dog) protein is Retinoid isomerohydrolase (RPE65).